The chain runs to 431 residues: DNA polymerase delta subunit 3 (431 aa).

The necessary for function, possibly resulting from its inability to interact with PolD2 stretch occupies residues 64-80 (QGSDSGEDLYSVVLESR). The segment at 128–431 (PGAGKIVPSA…AGIMNFFSKK (304 aa)) is disordered. Low complexity predominate over residues 156–171 (SKSAVKLEPSKSSLKS). Basic and acidic residues-rich tracts occupy residues 172-200 (EPAK…EQAS) and 252-271 (SPPE…NKKE). Positions 278–290 (PSPTKKPTTANTS) are enriched in low complexity. The segment covering 294–307 (FDEESAESSDEEEK) has biased composition (acidic residues). Composition is skewed to basic and acidic residues over residues 308 to 328 (LDML…EKAS) and 343 to 362 (QPPK…KMDT). Low complexity predominate over residues 387 to 411 (PANKKVSPKAAAPVNKKKSPPSAAK).

As to quaternary structure, component of both the DNA polymerase delta and DNA polymerase zeta complexes. The DNA polymerase delta complex consists of three subunits: the catalytic subunit PolD1 and two accessory subunits PolD2/Pol31 and PolD3/Pol32. Within the delta complex, interacts with both PolD1 and PolD2. Component of the DNA polymerase zeta complex consisting of four subunits: the catalytic subunit PolZ1 and three accessory subunits PolZ2/Rev7, PolD2/Pol31 and PolD3/Pol32. Expressed in ovaries (at the protein level). Expressed in ovaries.

The protein resides in the nucleus. Its subcellular location is the nucleoplasm. Accessory component of the DNA polymerase delta complex and possibly the DNA polymerase zeta complex. As a component of the delta complex, participates in high fidelity genome replication, including lagging strand synthesis, DNA recombination and repair. Required to recruit the DNA polymerase delta complex to the nucleus of rapidly dividing embryonic cells, and as a consequence is essential for genome replication during the earliest cell cycles. Increases the efficiency and processivity of DNA synthesis of the DNA polymerases during mitotic DNA replication and repair. During development this function is essential for preventing replication stress that results in the formation of chromosomal fragile sites (CFS) such as chromosomal breaks. Ensures genomic stability by promoting several types of DNA repair mechanisms including repairing broken dicentric chromosomes through homolog-dependent break-induced replication (BIR). During homologous recombination (HR) repair, required for maintaining the processivity of the delta complex during break-induced replication; a form of HR that requires extensive DNA synthesis such as the repair of large gaps. Able to suppress position effect variegation and may therefore have a role in the induction of chromatin state changes that likely include its activities in DNA replication and repair. In Drosophila melanogaster (Fruit fly), this protein is DNA polymerase delta subunit 3.